Reading from the N-terminus, the 248-residue chain is 23S rRNA (guanosine-2'-O-)-methyltransferase RlmB (248 aa).

S-adenosyl-L-methionine contacts are provided by Gly198, Leu218, and Leu227.

This sequence belongs to the class IV-like SAM-binding methyltransferase superfamily. RNA methyltransferase TrmH family. RlmB subfamily.

Its subcellular location is the cytoplasm. It carries out the reaction guanosine(2251) in 23S rRNA + S-adenosyl-L-methionine = 2'-O-methylguanosine(2251) in 23S rRNA + S-adenosyl-L-homocysteine + H(+). Its function is as follows. Specifically methylates the ribose of guanosine 2251 in 23S rRNA. This Pseudomonas putida (strain ATCC 47054 / DSM 6125 / CFBP 8728 / NCIMB 11950 / KT2440) protein is 23S rRNA (guanosine-2'-O-)-methyltransferase RlmB.